Reading from the N-terminus, the 500-residue chain is Probable malate:quinone oxidoreductase (500 aa).

It belongs to the MQO family. It depends on FAD as a cofactor.

The enzyme catalyses (S)-malate + a quinone = a quinol + oxaloacetate. It functions in the pathway carbohydrate metabolism; tricarboxylic acid cycle; oxaloacetate from (S)-malate (quinone route): step 1/1. The polypeptide is Probable malate:quinone oxidoreductase (Bacillus cereus (strain AH187)).